A 400-amino-acid polypeptide reads, in one-letter code: Enoyl-[acyl-carrier-protein] reductase [NADH] 1 (400 aa).

NAD(+)-binding positions include 48-53, 74-75, 111-112, and 139-140; these read GSSSGY, FE, DA, and LA. Residue Tyr-225 coordinates substrate. Residue Tyr-235 is the Proton donor of the active site. Residues Lys-244 and 273-275 each bind NAD(+); that span reads VVT.

This sequence belongs to the TER reductase family. Monomer.

It carries out the reaction a 2,3-saturated acyl-[ACP] + NAD(+) = a (2E)-enoyl-[ACP] + NADH + H(+). It functions in the pathway lipid metabolism; fatty acid biosynthesis. Involved in the final reduction of the elongation cycle of fatty acid synthesis (FAS II). Catalyzes the reduction of a carbon-carbon double bond in an enoyl moiety that is covalently linked to an acyl carrier protein (ACP). In Photobacterium profundum (strain SS9), this protein is Enoyl-[acyl-carrier-protein] reductase [NADH] 1.